Consider the following 91-residue polypeptide: Large ribosomal subunit protein uL22 (91 aa).

It belongs to the universal ribosomal protein uL22 family. As to quaternary structure, part of the 50S ribosomal subunit.

This protein binds specifically to 23S rRNA; its binding is stimulated by other ribosomal proteins, e.g. L4, L17, and L20. It is important during the early stages of 50S assembly. It makes multiple contacts with different domains of the 23S rRNA in the assembled 50S subunit and ribosome. Its function is as follows. The globular domain of the protein is located near the polypeptide exit tunnel on the outside of the subunit, while an extended beta-hairpin is found that lines the wall of the exit tunnel in the center of the 70S ribosome. The chain is Large ribosomal subunit protein uL22 (rplV) from Ash yellows phytoplasma.